We begin with the raw amino-acid sequence, 169 residues long: NADH-quinone oxidoreductase subunit B (169 aa).

[4Fe-4S] cluster is bound by residues Cys-45, Cys-46, Cys-111, and Cys-141.

This sequence belongs to the complex I 20 kDa subunit family. NDH-1 is composed of 14 different subunits. Subunits NuoB, C, D, E, F, and G constitute the peripheral sector of the complex. The cofactor is [4Fe-4S] cluster.

It is found in the cell membrane. The enzyme catalyses a quinone + NADH + 5 H(+)(in) = a quinol + NAD(+) + 4 H(+)(out). NDH-1 shuttles electrons from NADH, via FMN and iron-sulfur (Fe-S) centers, to quinones in the respiratory chain. The immediate electron acceptor for the enzyme in this species is believed to be a menaquinone. Couples the redox reaction to proton translocation (for every two electrons transferred, four hydrogen ions are translocated across the cytoplasmic membrane), and thus conserves the redox energy in a proton gradient. The sequence is that of NADH-quinone oxidoreductase subunit B from Clostridium beijerinckii (strain ATCC 51743 / NCIMB 8052) (Clostridium acetobutylicum).